Reading from the N-terminus, the 298-residue chain is Elongation factor Ts (298 aa).

The involved in Mg(2+) ion dislocation from EF-Tu stretch occupies residues 80 to 83 (TDFV).

Belongs to the EF-Ts family.

The protein localises to the cytoplasm. Functionally, associates with the EF-Tu.GDP complex and induces the exchange of GDP to GTP. It remains bound to the aminoacyl-tRNA.EF-Tu.GTP complex up to the GTP hydrolysis stage on the ribosome. This Paracidovorax citrulli (strain AAC00-1) (Acidovorax citrulli) protein is Elongation factor Ts.